Here is a 106-residue protein sequence, read N- to C-terminus: Envelope small membrane protein (106 aa).

Residues 1–11 lie on the Virion surface side of the membrane; the sequence is MMNLLNTSLEE. A helical transmembrane segment spans residues 12–32; the sequence is NGSFLTALYVICEFVALYLLG. At 33-106 the chain is on the intravirion side; sequence RALQAFVQAA…ANFQNGKLHT (74 aa).

It belongs to the gammacoronaviruses E protein family. Homooligomer. Interacts with the M membrane protein in the budding compartment of the host cell, which is located between endoplasmic reticulum and the Golgi complex. The cytoplasmic tails of both proteins are important for this function. Interacts with Nucleoprotein.

The protein resides in the host Golgi apparatus membrane. Its function is as follows. Plays a central role in virus morphogenesis and assembly. Acts as a viroporin and self-assembles in host membranes forming pentameric protein-lipid pores that allow ion transport. Also plays a role in the induction of apoptosis. The sequence is that of Envelope small membrane protein from Gallus gallus (Chicken).